The sequence spans 424 residues: UDP-N-acetylglucosamine 1-carboxyvinyltransferase (424 aa).

22–23 contributes to the phosphoenolpyruvate binding site; the sequence is KN. Arg-98 serves as a coordination point for UDP-N-acetyl-alpha-D-glucosamine. Catalysis depends on Cys-122, which acts as the Proton donor. The residue at position 122 (Cys-122) is a 2-(S-cysteinyl)pyruvic acid O-phosphothioketal. UDP-N-acetyl-alpha-D-glucosamine-binding positions include 127–131, Asp-312, and Ile-334; that span reads RPVDQ.

It belongs to the EPSP synthase family. MurA subfamily.

The protein resides in the cytoplasm. It carries out the reaction phosphoenolpyruvate + UDP-N-acetyl-alpha-D-glucosamine = UDP-N-acetyl-3-O-(1-carboxyvinyl)-alpha-D-glucosamine + phosphate. The protein operates within cell wall biogenesis; peptidoglycan biosynthesis. Functionally, cell wall formation. Adds enolpyruvyl to UDP-N-acetylglucosamine. In Xanthomonas axonopodis pv. citri (strain 306), this protein is UDP-N-acetylglucosamine 1-carboxyvinyltransferase.